Consider the following 354-residue polypeptide: DNA integrity scanning protein DisA (354 aa).

Residues 6–144 (EKELKSILKL…GHIKYVLRDS (139 aa)) enclose the DAC domain. ATP is bound by residues Gly73, Leu91, and 104–108 (TRHRT).

This sequence belongs to the DisA family. In terms of assembly, homooctamer. Mg(2+) is required as a cofactor.

It carries out the reaction 2 ATP = 3',3'-c-di-AMP + 2 diphosphate. Functionally, participates in a DNA-damage check-point that is active prior to asymmetric division when DNA is damaged. DisA forms globular foci that rapidly scan along the chromosomes during sporulation, searching for lesions. When a lesion is present, DisA pauses at the lesion site. This triggers a cellular response that culminates in a temporary block in sporulation initiation. Its function is as follows. Also has diadenylate cyclase activity, catalyzing the condensation of 2 ATP molecules into cyclic di-AMP (c-di-AMP). c-di-AMP acts as a signaling molecule that couples DNA integrity with progression of sporulation. The rise in c-di-AMP level generated by DisA while scanning the chromosome, operates as a positive signal that advances sporulation; upon encountering a lesion, the DisA focus arrests at the damaged site and halts c-di-AMP synthesis. This chain is DNA integrity scanning protein DisA, found in Clostridium kluyveri (strain ATCC 8527 / DSM 555 / NBRC 12016 / NCIMB 10680 / K1).